A 377-amino-acid chain; its full sequence is Nitric oxide reductase FlRd-NAD(+) reductase (377 aa).

It belongs to the FAD-dependent oxidoreductase family. It depends on FAD as a cofactor.

The protein localises to the cytoplasm. It carries out the reaction 2 reduced [nitric oxide reductase rubredoxin domain] + NAD(+) + H(+) = 2 oxidized [nitric oxide reductase rubredoxin domain] + NADH. Its pathway is nitrogen metabolism; nitric oxide reduction. One of at least two accessory proteins for anaerobic nitric oxide (NO) reductase. Reduces the rubredoxin moiety of NO reductase. The sequence is that of Nitric oxide reductase FlRd-NAD(+) reductase from Salmonella dublin (strain CT_02021853).